The primary structure comprises 192 residues: UPF0312 protein Ent638_1570 (192 aa).

An N-terminal signal peptide occupies residues 1–22 (MKKRLLGIALGSLLFTTGSAVA).

It belongs to the UPF0312 family. Type 1 subfamily.

It is found in the periplasm. The sequence is that of UPF0312 protein Ent638_1570 from Enterobacter sp. (strain 638).